A 748-amino-acid chain; its full sequence is Glucans biosynthesis glucosyltransferase H (748 aa).

7 helical membrane passes run 85 to 107 (LIVR…GYGM), 127 to 149 (FLVL…FVLL), 443 to 465 (GIGS…LISL), 494 to 516 (AWVF…LVLI), 529 to 551 (GRVL…CMMI), 587 to 606 (LAGP…SVSL), and 608 to 630 (LLLW…IMTS).

Belongs to the glycosyltransferase 2 family. OpgH subfamily.

The protein localises to the cell inner membrane. It participates in glycan metabolism; osmoregulated periplasmic glucan (OPG) biosynthesis. In terms of biological role, involved in the biosynthesis of osmoregulated periplasmic glucans (OPGs). In Bradyrhizobium diazoefficiens (strain JCM 10833 / BCRC 13528 / IAM 13628 / NBRC 14792 / USDA 110), this protein is Glucans biosynthesis glucosyltransferase H.